The chain runs to 267 residues: Undecaprenyl-diphosphatase (267 aa).

The next 8 helical transmembrane spans lie at 4-24, 41-61, 84-104, 116-136, 160-180, 185-205, 216-236, and 246-266; these read ILII…PISS, NIQN…ILLF, ILIL…GFMF, YISY…FISL, CFSL…GLIL, YVLF…VLIL, ENIF…LIFG, and TSLI…LFTC.

It belongs to the UppP family.

Its subcellular location is the cell membrane. It catalyses the reaction di-trans,octa-cis-undecaprenyl diphosphate + H2O = di-trans,octa-cis-undecaprenyl phosphate + phosphate + H(+). Catalyzes the dephosphorylation of undecaprenyl diphosphate (UPP). Confers resistance to bacitracin. The polypeptide is Undecaprenyl-diphosphatase (Wigglesworthia glossinidia brevipalpis).